Consider the following 261-residue polypeptide: Cytochrome c oxidase subunit 3 (261 aa).

At 1–15 the chain is on the mitochondrial matrix side; sequence MTHQTHAYHMVNPSP. The chain crosses the membrane as a helical span at residues 16–34; sequence WPLTGAMSALLLTSGLIMW. At 35–40 the chain is on the mitochondrial intermembrane side; the sequence is FHFNSY. The helical transmembrane segment at 41 to 66 threads the bilayer; the sequence is TLLLLGLLTNLISSYQWWRDIVREGT. Topologically, residues 67 to 72 are mitochondrial matrix; sequence YQGHHT. The helical transmembrane segment at 73–105 threads the bilayer; sequence KIVQKGLRYGMILFIISEVFFFLGFFWAFYHSS. Over 106-128 the chain is Mitochondrial intermembrane; that stretch reads LAPTPELGGCWPPTGISPLNPLE. The helical transmembrane segment at 129 to 152 threads the bilayer; it reads VPLLNTSILLASGVSITWAHHSLM. Topologically, residues 153–155 are mitochondrial matrix; the sequence is EGN. Residues 156 to 183 traverse the membrane as a helical segment; sequence RKQMLQALTITIALGLYFTALQAMEYYE. The Mitochondrial intermembrane segment spans residues 184–190; sequence ASFTISD. A helical membrane pass occupies residues 191 to 223; the sequence is GVYGSTFFVATGFHGLHVIIGTTFLITCLVRQT. Residues 224-232 are Mitochondrial matrix-facing; that stretch reads LYHFTSNHH. The chain crosses the membrane as a helical span at residues 233 to 256; that stretch reads FGFEAAAWYWHFVDVVWLFLYVSI. Over 257–261 the chain is Mitochondrial intermembrane; that stretch reads YWWGS.

It belongs to the cytochrome c oxidase subunit 3 family. In terms of assembly, component of the cytochrome c oxidase (complex IV, CIV), a multisubunit enzyme composed of 14 subunits. The complex is composed of a catalytic core of 3 subunits MT-CO1, MT-CO2 and MT-CO3, encoded in the mitochondrial DNA, and 11 supernumerary subunits COX4I, COX5A, COX5B, COX6A, COX6B, COX6C, COX7A, COX7B, COX7C, COX8 and NDUFA4, which are encoded in the nuclear genome. The complex exists as a monomer or a dimer and forms supercomplexes (SCs) in the inner mitochondrial membrane with NADH-ubiquinone oxidoreductase (complex I, CI) and ubiquinol-cytochrome c oxidoreductase (cytochrome b-c1 complex, complex III, CIII), resulting in different assemblies (supercomplex SCI(1)III(2)IV(1) and megacomplex MCI(2)III(2)IV(2)).

The protein localises to the mitochondrion inner membrane. The enzyme catalyses 4 Fe(II)-[cytochrome c] + O2 + 8 H(+)(in) = 4 Fe(III)-[cytochrome c] + 2 H2O + 4 H(+)(out). Its function is as follows. Component of the cytochrome c oxidase, the last enzyme in the mitochondrial electron transport chain which drives oxidative phosphorylation. The respiratory chain contains 3 multisubunit complexes succinate dehydrogenase (complex II, CII), ubiquinol-cytochrome c oxidoreductase (cytochrome b-c1 complex, complex III, CIII) and cytochrome c oxidase (complex IV, CIV), that cooperate to transfer electrons derived from NADH and succinate to molecular oxygen, creating an electrochemical gradient over the inner membrane that drives transmembrane transport and the ATP synthase. Cytochrome c oxidase is the component of the respiratory chain that catalyzes the reduction of oxygen to water. Electrons originating from reduced cytochrome c in the intermembrane space (IMS) are transferred via the dinuclear copper A center (CU(A)) of subunit 2 and heme A of subunit 1 to the active site in subunit 1, a binuclear center (BNC) formed by heme A3 and copper B (CU(B)). The BNC reduces molecular oxygen to 2 water molecules using 4 electrons from cytochrome c in the IMS and 4 protons from the mitochondrial matrix. This chain is Cytochrome c oxidase subunit 3 (MT-CO3), found in Ornithorhynchus anatinus (Duckbill platypus).